Consider the following 602-residue polypeptide: DEAD-box ATP-dependent RNA helicase 53 (602 aa).

A compositionally biased stretch (low complexity) spans 33 to 43 (ASPLDPCRGPA). The disordered stretch occupies residues 33–76 (ASPLDPCRGPAAPEPPRRRAFHGSPSPLGFRSTPASWSSPEAGA). The Q motif signature appears at 84-112 (LEVARLGISPWIVERLAARGITRLFPIQR). In terms of domain architecture, Helicase ATP-binding spans 115 to 288 (LDPAMQGKDM…SKYLKDPIII (174 aa)). 128–135 (ARTGTGKT) is an ATP binding site. A DEAD box motif is present at residues 236–239 (DEAD). The 146-residue stretch at 317–462 (ILGPLIKEHA…LPKIEVADEA (146 aa)) folds into the Helicase C-terminal domain. Residues 503 to 602 (FGDFDGFGSS…GRSGGFDDSN (100 aa)) form a disordered region.

It belongs to the DEAD box helicase family. DDX21/DDX50 subfamily.

The catalysed reaction is ATP + H2O = ADP + phosphate + H(+). This is DEAD-box ATP-dependent RNA helicase 53 from Oryza sativa subsp. japonica (Rice).